The chain runs to 398 residues: 1-deoxy-D-xylulose 5-phosphate reductoisomerase (398 aa).

NADPH contacts are provided by Thr-10, Gly-11, Ser-12, Ile-13, Gly-36, Lys-37, Asn-38, and Asn-124. Lys-125 is a 1-deoxy-D-xylulose 5-phosphate binding site. Glu-126 contributes to the NADPH binding site. Asp-150 serves as a coordination point for Mn(2+). Positions 151, 152, 186, and 209 each coordinate 1-deoxy-D-xylulose 5-phosphate. Glu-152 lines the Mn(2+) pocket. NADPH is bound at residue Gly-215. Residues Ser-222, Asn-227, Lys-228, and Glu-231 each contribute to the 1-deoxy-D-xylulose 5-phosphate site. Glu-231 lines the Mn(2+) pocket.

This sequence belongs to the DXR family. Homodimer. Mg(2+) serves as cofactor. Mn(2+) is required as a cofactor.

It catalyses the reaction 2-C-methyl-D-erythritol 4-phosphate + NADP(+) = 1-deoxy-D-xylulose 5-phosphate + NADPH + H(+). It participates in isoprenoid biosynthesis; isopentenyl diphosphate biosynthesis via DXP pathway; isopentenyl diphosphate from 1-deoxy-D-xylulose 5-phosphate: step 1/6. In terms of biological role, catalyzes the NADPH-dependent rearrangement and reduction of 1-deoxy-D-xylulose-5-phosphate (DXP) to 2-C-methyl-D-erythritol 4-phosphate (MEP). The sequence is that of 1-deoxy-D-xylulose 5-phosphate reductoisomerase from Salmonella choleraesuis (strain SC-B67).